Here is a 729-residue protein sequence, read N- to C-terminus: Fibroblast growth factor receptor 2 (729 aa).

The first 21 residues, 1-21, serve as a signal peptide directing secretion; sequence MFSWSYLMGLVMVATATLSLA. Topologically, residues 22 to 285 are extracellular; the sequence is RPSYNIAEDT…ELDSSSEYTE (264 aa). Residues 29 to 62 are disordered; it reads EDTTLEPEDANSSGDDEDDNDGSEDFTNDNNHMR. Positions 31–55 are enriched in acidic residues; sequence TTLEPEDANSSGDDEDDNDGSEDFT. N-linked (GlcNAc...) asparagine glycosylation occurs at Asn39. Ig-like C2-type domains are found at residues 64–157 and 166–268; these read PYWT…YHLD and PILQ…AWLT. Positions 71–88 are heparin-binding; sequence KLEKKLHAVPAANTVKFR. An intrachain disulfide couples Cys89 to Cys141. Asn138, Asn151, Asn175, Asn207, Asn228, Asn241, and Asn256 each carry an N-linked (GlcNAc...) asparagine glycan. Cys188 and Cys252 are oxidised to a cystine. Residues 286-306 traverse the membrane as a helical segment; it reads IAIYCVGGFLITCMIGTIMVC. Residues 307–729 are Cytoplasmic-facing; the sequence is HMKGRGKKSD…SQHTNGTIKT (423 aa). Phosphotyrosine; by autocatalysis is present on Tyr374. The region spanning 389–678 is the Protein kinase domain; sequence LTLGKPLGEG…LTQTTNEEYL (290 aa). ATP contacts are provided by residues 395–403, Lys425, 473–475, and Asn479; these read LGEGCFGQV and EYA. A Phosphotyrosine; by autocatalysis modification is found at Tyr494. Asp534 (proton acceptor) is an active-site residue. Tyr564, Tyr565, and Tyr677 each carry phosphotyrosine; by autocatalysis. The tract at residues 683-729 is disordered; the sequence is PLEQYSPSYPDTRSSCSSGDDSVFSPDAMPYDPCLPKSQHTNGTIKT. Residues 693–707 show a composition bias toward low complexity; sequence DTRSSCSSGDDSVFS. Polar residues predominate over residues 720-729; it reads SQHTNGTIKT.

Belongs to the protein kinase superfamily. Tyr protein kinase family. Fibroblast growth factor receptor subfamily. In terms of assembly, monomer. Homodimer after ligand binding. In terms of processing, autophosphorylated. Binding of FGF family members together with heparan sulfate proteoglycan or heparin promotes receptor dimerization and autophosphorylation on tyrosine residues. Autophosphorylation occurs in trans between the two FGFR molecules present in the dimer. Post-translationally, N-glycosylated in the endoplasmic reticulum. The N-glycan chains undergo further maturation to an Endo H-resistant form in the Golgi apparatus. Ubiquitinated. FGFR2 is rapidly ubiquitinated after autophosphorylation, leading to internalization and degradation. Subject to degradation both in lysosomes and by the proteasome.

It is found in the cell membrane. The protein localises to the golgi apparatus. Its subcellular location is the cytoplasmic vesicle. The catalysed reaction is L-tyrosyl-[protein] + ATP = O-phospho-L-tyrosyl-[protein] + ADP + H(+). Its activity is regulated as follows. Present in an inactive conformation in the absence of bound ligand. Ligand binding leads to dimerization and activation by autophosphorylation on tyrosine residues. Its function is as follows. Tyrosine-protein kinase that acts as a cell-surface receptor for fibroblast growth factors and plays an essential role in the regulation of cell proliferation, differentiation, migration and apoptosis, and in the regulation of embryonic development. Required for normal embryonic patterning, limb bud development, lung morphogenesis, osteogenesis and skin development. Plays an essential role in the regulation of osteoblast differentiation, proliferation and apoptosis, and is required for normal skeleton development. Promotes cell proliferation in keratinocytes and immature osteoblasts, but promotes apoptosis in differentiated osteoblasts. Phosphorylates PLCG1, FRS2 and PAK4. Ligand binding leads to the activation of several signaling cascades. Activation of PLCG1 leads to the production of the cellular signaling molecules diacylglycerol and inositol 1,4,5-trisphosphate. Phosphorylation of FRS2 triggers recruitment of GRB2, GAB1, PIK3R1 and SOS1, and mediates activation of RAS, MAPK1/ERK2, MAPK3/ERK1 and the MAP kinase signaling pathway, as well as of the AKT1 signaling pathway. FGFR2 signaling is down-regulated by ubiquitination, internalization and degradation. Mutations that lead to constitutive kinase activation or impair normal FGFR2 maturation, internalization and degradation lead to aberrant signaling. Over-expressed FGFR2 promotes activation of STAT1. This Notophthalmus viridescens (Eastern newt) protein is Fibroblast growth factor receptor 2 (FGFR2).